Here is a 303-residue protein sequence, read N- to C-terminus: MMRIGLFLLTNLAVLVVFSIVFGILSSVFGLGSVHGAGGLNIASLAVMCAVYGMIGSMISLFLSKWMAKRSTGTVVIEQPRNASEQWLVETVAKQAKAVNIDMPEVGIFDNAQPNAFATGWNKNKALVAVSSGLLHTMTPDEVEAVLAHEIGHVANGDMVTLALIQGVVNAFVMFFARIVGSFVDRVVFKNEDGPGIGYFVTSIVMDILLGFLASAIVMWFSRQREFRADAMGAKLAGRDKMISALNALRPAEARPDQMPENMQAFAISSGQTQGFSIANFFRSHPTLDDRIEALKKYTPGQS.

The next 2 membrane-spanning stretches (helical) occupy residues 4-24 and 42-62; these read IGLF…VFGI and IASL…ISLF. A Zn(2+)-binding site is contributed by His-149. The active site involves Glu-150. His-153 contacts Zn(2+). The next 2 membrane-spanning stretches (helical) occupy residues 157-177 and 200-220; these read GDMV…MFFA and FVTS…IVMW. Glu-226 provides a ligand contact to Zn(2+).

Belongs to the peptidase M48B family. Zn(2+) is required as a cofactor.

Its subcellular location is the cell inner membrane. The polypeptide is Protease HtpX (Psychrobacter sp. (strain PRwf-1)).